Here is a 312-residue protein sequence, read N- to C-terminus: Acetyl-coenzyme A carboxylase carboxyl transferase subunit alpha (312 aa).

Residues 36–286 (RLDKEVKSIY…KEYFLDALRT (251 aa)) enclose the CoA carboxyltransferase C-terminal domain.

Belongs to the AccA family. As to quaternary structure, acetyl-CoA carboxylase is a heterohexamer composed of biotin carboxyl carrier protein (AccB), biotin carboxylase (AccC) and two subunits each of ACCase subunit alpha (AccA) and ACCase subunit beta (AccD).

The protein resides in the cytoplasm. It carries out the reaction N(6)-carboxybiotinyl-L-lysyl-[protein] + acetyl-CoA = N(6)-biotinyl-L-lysyl-[protein] + malonyl-CoA. It functions in the pathway lipid metabolism; malonyl-CoA biosynthesis; malonyl-CoA from acetyl-CoA: step 1/1. Its function is as follows. Component of the acetyl coenzyme A carboxylase (ACC) complex. First, biotin carboxylase catalyzes the carboxylation of biotin on its carrier protein (BCCP) and then the CO(2) group is transferred by the carboxyltransferase to acetyl-CoA to form malonyl-CoA. This is Acetyl-coenzyme A carboxylase carboxyl transferase subunit alpha from Helicobacter pylori (strain Shi470).